A 453-amino-acid polypeptide reads, in one-letter code: Serine/threonine-protein phosphatase 2A 55 kDa regulatory subunit B delta isoform (453 aa).

WD repeat units lie at residues 32–71 (AEAD…KGRA), 97–138 (EIEE…KRAE), 181–219 (AHTY…RSFN), and 230–270 (ELTE…LCDR). A Phosphoserine modification is found at Ser-285. WD repeat units lie at residues 289-327 (EIIS…RPVE), 344-385 (ENDC…DVTL), and 420-452 (DFNK…QDKI). Residue Tyr-305 is modified to Phosphotyrosine. Thr-308 carries the phosphothreonine modification. The interval 385 to 406 (LEASRENSKPRASLKPRKVCSG) is disordered.

This sequence belongs to the phosphatase 2A regulatory subunit B family. As to quaternary structure, PP2A consists of a common heterodimeric core enzyme, composed of a 36 kDa catalytic subunit (subunit C) and a 65 kDa constant regulatory subunit (PR65 or subunit A), that associates with a variety of regulatory subunits. Proteins that associate with the core dimer include three families of regulatory subunits B (the R2/B/PR55/B55, R3/B''/PR72/PR130/PR59 and R5/B'/B56 families), the 48 kDa variable regulatory subunit, viral proteins, and cell signaling molecules. Interacts with ENSA (when phosphorylated at 'Ser-67') and ARPP19 (when phosphorylated at 'Ser-62'), leading to inhibit PP2A activity. Interacts with IER5. As to expression, widely expressed with high levels in brain, heart, placenta, skeletal muscle, testis, thymus and spleen.

The protein resides in the cytoplasm. In terms of biological role, substrate-recognition subunit of protein phosphatase 2A (PP2A) that plays a key role in cell cycle by controlling mitosis entry and exit. Involved in chromosome clustering during late mitosis by mediating dephosphorylation of MKI67. The activity of PP2A complexes containing PPP2R2D (PR55-delta) fluctuate during the cell cycle: the activity is high in interphase and low in mitosis. The protein is Serine/threonine-protein phosphatase 2A 55 kDa regulatory subunit B delta isoform (Ppp2r2d) of Rattus norvegicus (Rat).